The following is a 148-amino-acid chain: Arginine repressor (148 aa).

It belongs to the ArgR family.

It localises to the cytoplasm. The protein operates within amino-acid biosynthesis; L-arginine biosynthesis [regulation]. In terms of biological role, regulates arginine biosynthesis genes. In Chlorobium phaeobacteroides (strain BS1), this protein is Arginine repressor.